The primary structure comprises 280 residues: Polyamine aminopropyltransferase 1 (280 aa).

Residues 3-237 (DIVFIERDPY…YWWTFSIASK (235 aa)) enclose the PABS domain. Gln-33 lines the S-methyl-5'-thioadenosine pocket. Spermidine contacts are provided by His-64 and Asp-88. Residues Asp-108 and 139-140 (DG) contribute to the S-methyl-5'-thioadenosine site. Asp-157 acts as the Proton acceptor in catalysis. Residue 157-160 (DSTD) participates in spermidine binding.

Belongs to the spermidine/spermine synthase family. As to quaternary structure, homodimer or homotetramer.

It localises to the cytoplasm. The catalysed reaction is S-adenosyl 3-(methylsulfanyl)propylamine + putrescine = S-methyl-5'-thioadenosine + spermidine + H(+). It participates in amine and polyamine biosynthesis; spermidine biosynthesis; spermidine from putrescine: step 1/1. Functionally, catalyzes the irreversible transfer of a propylamine group from the amino donor S-adenosylmethioninamine (decarboxy-AdoMet) to putrescine (1,4-diaminobutane) to yield spermidine. The polypeptide is Polyamine aminopropyltransferase 1 (Aquifex aeolicus (strain VF5)).